Here is a 392-residue protein sequence, read N- to C-terminus: Transcription factor GATA-4 (392 aa).

The tract at residues 75-113 (SSAYNPGTSHPPVSPRFTFSSSPPITAPSSREVSYSSPL) is disordered. A compositionally biased stretch (polar residues) spans 91 to 113 (FTFSSSPPITAPSSREVSYSSPL). 2 consecutive GATA-type zinc fingers follow at residues 184-208 (CVNCGAMSTPLWRRDGTGHYLCNAC) and 238-262 (CANCHTTTTTLWRRNAEGEPVCNAC). Disordered regions lie at residues 279–339 (KEGI…HSNS) and 359–392 (MPSLKLSPQNHHSTFNPSPQANSKHDSWNNLVLA). Over residues 284–293 (TRKRKPKNLS) the composition is skewed to basic residues. Residues 302 to 316 (SGSDSLTPSTSSTNS) are compositionally biased toward low complexity. Residues 364–380 (LSPQNHHSTFNPSPQAN) are compositionally biased toward polar residues.

In terms of tissue distribution, expressed at high levels in heart, small intestine, stomach, ovary, and liver. Found at much lower levels in lung, spleen, pancreas and skin.

The protein resides in the nucleus. Its function is as follows. Transcriptional activator that binds to the consensus sequence 5'-AGATAG-3'. Associated with cardiac specification and can regulate cardiac-specific transcription during embryogenesis. Activates the expression of cardiac MHC-alpha in vivo. This chain is Transcription factor GATA-4 (gata4), found in Xenopus laevis (African clawed frog).